Consider the following 268-residue polypeptide: 4-hydroxy-tetrahydrodipicolinate reductase (268 aa).

9–14 (GCSGRM) is a binding site for NAD(+). Arg-36 is a binding site for NADP(+). NAD(+)-binding positions include 98–100 (GTT) and 122–125 (APNT). The active-site Proton donor/acceptor is His-155. His-156 is a binding site for (S)-2,3,4,5-tetrahydrodipicolinate. Residue Lys-159 is the Proton donor of the active site. 165 to 166 (GT) provides a ligand contact to (S)-2,3,4,5-tetrahydrodipicolinate.

It belongs to the DapB family.

It localises to the cytoplasm. It carries out the reaction (S)-2,3,4,5-tetrahydrodipicolinate + NAD(+) + H2O = (2S,4S)-4-hydroxy-2,3,4,5-tetrahydrodipicolinate + NADH + H(+). It catalyses the reaction (S)-2,3,4,5-tetrahydrodipicolinate + NADP(+) + H2O = (2S,4S)-4-hydroxy-2,3,4,5-tetrahydrodipicolinate + NADPH + H(+). The protein operates within amino-acid biosynthesis; L-lysine biosynthesis via DAP pathway; (S)-tetrahydrodipicolinate from L-aspartate: step 4/4. Its function is as follows. Catalyzes the conversion of 4-hydroxy-tetrahydrodipicolinate (HTPA) to tetrahydrodipicolinate. This is 4-hydroxy-tetrahydrodipicolinate reductase from Colwellia psychrerythraea (strain 34H / ATCC BAA-681) (Vibrio psychroerythus).